A 333-amino-acid polypeptide reads, in one-letter code: Adenosine deaminase (333 aa).

Residues H12 and H14 each contribute to the Zn(2+) site. Residues H14, D16, and G170 each coordinate substrate. H197 provides a ligand contact to Zn(2+). The Proton donor role is filled by E200. D278 provides a ligand contact to Zn(2+). Position 279 (D279) interacts with substrate.

Belongs to the metallo-dependent hydrolases superfamily. Adenosine and AMP deaminases family. Adenosine deaminase subfamily. Requires Zn(2+) as cofactor.

The catalysed reaction is adenosine + H2O + H(+) = inosine + NH4(+). It catalyses the reaction 2'-deoxyadenosine + H2O + H(+) = 2'-deoxyinosine + NH4(+). Its function is as follows. Catalyzes the hydrolytic deamination of adenosine and 2-deoxyadenosine. The protein is Adenosine deaminase of Edwardsiella ictaluri (strain 93-146).